Here is a 391-residue protein sequence, read N- to C-terminus: DNA primase small subunit PriS (391 aa).

Active-site residues include D98, D100, and D294.

The protein belongs to the eukaryotic-type primase small subunit family. Heterodimer of a small subunit (PriS) and a large subunit (PriL). It depends on Mg(2+) as a cofactor. The cofactor is Mn(2+).

Functionally, catalytic subunit of DNA primase, an RNA polymerase that catalyzes the synthesis of short RNA molecules used as primers for DNA polymerase during DNA replication. The small subunit contains the primase catalytic core and has DNA synthesis activity on its own. Binding to the large subunit stabilizes and modulates the activity, increasing the rate of DNA synthesis while decreasing the length of the DNA fragments, and conferring RNA synthesis capability. The DNA polymerase activity may enable DNA primase to also catalyze primer extension after primer synthesis. May also play a role in DNA repair. This chain is DNA primase small subunit PriS, found in Halobacterium salinarum (strain ATCC 29341 / DSM 671 / R1).